A 315-amino-acid polypeptide reads, in one-letter code: THO complex subunit 3 (315 aa).

WD repeat units lie at residues 18-57 (GHKK…HSKA), 64-104 (GHTD…CTQQ), 106-145 (ELSG…PLHR), 189-228 (AHTA…CLRT), 231-270 (KLEW…TVHQ), and 272-311 (PCRA…RIFG).

The protein belongs to the THOC3 family. Component of the THO complex, which is composed of THO1, THO2, THO3, THO5, THO6 and THO7.

The protein localises to the nucleus. Its function is as follows. Acts as a component of the THO subcomplex of the TREX complex which is thought to couple mRNA transcription, processing and nuclear export. Contributes to the integrity of the endogenous trans-acting small interfering RNA (ta-siRNA) pathway. May process or transport a long RNA molecule so that it can be a template for secondary siRNA production. May participate in the trafficking of siRNA precursors to the ARGONAUTE catalytic center. Required for the generation of functional messenger ribonucleoproteins (mRNPs). The protein is THO complex subunit 3 (THO3) of Arabidopsis thaliana (Mouse-ear cress).